A 396-amino-acid polypeptide reads, in one-letter code: Tryptophan synthase beta chain (396 aa).

An N6-(pyridoxal phosphate)lysine modification is found at Lys88.

The protein belongs to the TrpB family. Tetramer of two alpha and two beta chains. Pyridoxal 5'-phosphate is required as a cofactor.

It carries out the reaction (1S,2R)-1-C-(indol-3-yl)glycerol 3-phosphate + L-serine = D-glyceraldehyde 3-phosphate + L-tryptophan + H2O. The protein operates within amino-acid biosynthesis; L-tryptophan biosynthesis; L-tryptophan from chorismate: step 5/5. Its function is as follows. The beta subunit is responsible for the synthesis of L-tryptophan from indole and L-serine. The polypeptide is Tryptophan synthase beta chain (Actinobacillus pleuropneumoniae serotype 3 (strain JL03)).